We begin with the raw amino-acid sequence, 107 residues long: Monogrin 2 (107 aa).

The first 20 residues, 1-20 (MEGKVLLCFALLLPFTVAQA), serve as a signal peptide directing secretion. Cystine bridges form between Cys28–Cys82, Cys36–Cys62, and Cys55–Cys78. In terms of domain architecture, BPTI/Kunitz inhibitor spans 29–82 (GYLMMQRCRGDTTETKAWGFNYEEKKCQKETVICGTGGAPRNAFETKKDCDALC). Positions 37-39 (RGD) match the Cell attachment site motif.

In terms of processing, the N-terminus is blocked. Expressed in salivary glands.

The protein localises to the cytoplasmic vesicle. It localises to the secretory vesicle. It is found in the secreted. Functionally, tick salivary platelet aggregation inhibitor that plays an important part in the anti-hemostatic strategy of ticks. Inhibits platelet aggregation induced by ADP (IC(50)~150 nM), collagen, and platelet activating factor (PAF). Acts by binding to platelet membrane glycoprotein IIb-IIIa (ITGA2B/ITGB3) in a metal ion dependent manner. Does not inhibit aggregation induced by ristocecin, an agonist that aggregates platelets independently from the glycoprotein IIb-IIIa (ITGA2B/ITGB3). In contrast to other tick platelet aggregation inhibitors, this protein does not protect ITGA2B/ITGB3 from dissociation under SDS condition, suggesting it may dissocate much faster than its orthologs. The chain is Monogrin 2 from Argas monolakensis (Mono lake bird tick).